The sequence spans 237 residues: Ubiquinone/menaquinone biosynthesis C-methyltransferase UbiE (237 aa).

S-adenosyl-L-methionine is bound by residues threonine 60 and aspartate 80.

The protein belongs to the class I-like SAM-binding methyltransferase superfamily. MenG/UbiE family.

It carries out the reaction a 2-demethylmenaquinol + S-adenosyl-L-methionine = a menaquinol + S-adenosyl-L-homocysteine + H(+). It catalyses the reaction a 2-methoxy-6-(all-trans-polyprenyl)benzene-1,4-diol + S-adenosyl-L-methionine = a 5-methoxy-2-methyl-3-(all-trans-polyprenyl)benzene-1,4-diol + S-adenosyl-L-homocysteine + H(+). The protein operates within quinol/quinone metabolism; menaquinone biosynthesis; menaquinol from 1,4-dihydroxy-2-naphthoate: step 2/2. It participates in cofactor biosynthesis; ubiquinone biosynthesis. In terms of biological role, methyltransferase required for the conversion of demethylmenaquinol (DMKH2) to menaquinol (MKH2) and the conversion of 2-polyprenyl-6-methoxy-1,4-benzoquinol (DDMQH2) to 2-polyprenyl-3-methyl-6-methoxy-1,4-benzoquinol (DMQH2). The polypeptide is Ubiquinone/menaquinone biosynthesis C-methyltransferase UbiE (Syntrophotalea carbinolica (strain DSM 2380 / NBRC 103641 / GraBd1) (Pelobacter carbinolicus)).